A 381-amino-acid chain; its full sequence is Ribosome assembly 1 protein (381 aa).

The residue at position 1 (methionine 1) is an N-acetylmethionine. Disordered stretches follow at residues 1 to 38 (MNYNNFENSKGDGHSRLPKPTYSGTLSDGYDESKIKRQ), 164 to 216 (KDTF…DRDE), and 350 to 381 (FGSSEDNNKNHYKPNYKNRKPNLSRANFTRNK). A Phosphoserine modification is found at serine 172. A compositionally biased stretch (basic residues) spans 359–371 (NHYKPNYKNRKPN).

Its subcellular location is the nucleus. Involved in a late nucleoplasmic step of 60S ribosomal subunit assembly. The polypeptide is Ribosome assembly 1 protein (RSA1) (Saccharomyces cerevisiae (strain ATCC 204508 / S288c) (Baker's yeast)).